Reading from the N-terminus, the 1097-residue chain is Putative regulator of nonsense transcripts 1 (1097 aa).

Low complexity predominate over residues 42–53; sequence SQTQTQGHTQSQ. Residues 42–67 form a disordered region; that stretch reads SQTQTQGHTQSQLDNQLNGPDDGLHN. In terms of domain architecture, Upf1 CH-rich spans 96-254; sequence TKDLPVHACR…NKLEELWKDN (159 aa). Zn(2+) is bound by residues Cys104, Cys108, Cys119, Ser122, Cys127, His137, His141, Cys147, Cys165, Cys168, Cys191, and Cys195. The segment at 104 to 137 is C3H; sequence CRSYCGIHDPACVVYCNTSKKWFCNGRGNTSGSH. The CC/SHH/C stretch occupies residues 119-147; the sequence is CNTSKKWFCNGRGNTSGSHIVNHLVRAKC. A C4 region spans residues 165–195; sequence CYNCGCRNVFLLGFIPAKADSVVVLLCRQPC. ATP contacts are provided by residues Gln457, 474-481, Tyr683, and Glu813; that span reads GPPGTGKT. The tract at residues 977–998 is disordered; sequence QGQTNGPAAGRGAMKGKSGRGG.

This sequence belongs to the DNA2/NAM7 helicase family.

Its subcellular location is the cytoplasm. The protein resides in the P-body. It carries out the reaction ATP + H2O = ADP + phosphate + H(+). Its function is as follows. RNA-dependent helicase required for nonsense-mediated decay (NMD) of aberrant mRNAs containing premature stop codons and modulates the expression level of normal mRNAs. The formation of an rent1-rent2-rent3 surveillance complex is believed to activate NMD. The polypeptide is Putative regulator of nonsense transcripts 1 (rent1) (Takifugu rubripes (Japanese pufferfish)).